A 462-amino-acid chain; its full sequence is Polygalacturonase (462 aa).

The N-terminal stretch at M1 to T22 is a signal peptide. N-linked (GlcNAc...) asparagine glycosylation occurs at N173. Residue D278 is the Proton donor of the active site. The cysteines at positions 280 and 297 are disulfide-linked. Residue N294 is glycosylated (N-linked (GlcNAc...) asparagine). The active site involves H301. N358 is a glycosylation site (N-linked (GlcNAc...) asparagine). Cystine bridges form between C407–C413 and C435–C460.

This sequence belongs to the glycosyl hydrolase 28 family.

The protein localises to the secreted. It localises to the cell wall. The catalysed reaction is (1,4-alpha-D-galacturonosyl)n+m + H2O = (1,4-alpha-D-galacturonosyl)n + (1,4-alpha-D-galacturonosyl)m.. In terms of biological role, acts in concert with the pectinesterase, in the ripening process. Is involved in cell wall metabolism, specifically in polyuronide degradation. The polypeptide is Polygalacturonase (Persea americana (Avocado)).